We begin with the raw amino-acid sequence, 599 residues long: UvrABC system protein C (599 aa).

The region spanning 18–96 (QLPGVYKMLG…IKQHRPPYNI (79 aa)) is the GIY-YIG domain. The UVR domain occupies 207 to 242 (KELNQELIAKMEQAAADLEFEKAVFYRDRLSLLREV).

Belongs to the UvrC family. In terms of assembly, interacts with UvrB in an incision complex.

The protein localises to the cytoplasm. In terms of biological role, the UvrABC repair system catalyzes the recognition and processing of DNA lesions. UvrC both incises the 5' and 3' sides of the lesion. The N-terminal half is responsible for the 3' incision and the C-terminal half is responsible for the 5' incision. The protein is UvrABC system protein C of Acinetobacter baumannii (strain SDF).